The following is a 607-amino-acid chain: MTDLHSTVEKVTARVIERSRETRKAYLDLIQYEREKGVDRPNLSCSNLAHGFAAMNGDKPALRDFNRMNIGVVTSYNDMLSAHEPYYRYPEQMKVFAREVGATVQVAGGVPAMCDGVTQGQPGMEESLFSRDVIALATSVSLSHGMFEGAALLGICDKIVPGLLMGALRFGHLPTILVPSGPMTTGIPNKEKIRIRQLYAQGKIGQKELLDMEAACYHAEGTCTFYGTANTNQMVMEVLGLHMPGSAFVTPGTPLRQALTRAAVHRVAELGWKGDDYRPLGKIIDEKSIVNAIVGLLATGGSTNHTMHIPAIARAAGVIVNWNDFHDLSEVVPLIARIYPNGPRDINEFQNAGGMAYVIKELLSANLLNRDVTTIAKGGIEEYAKAPALNDAGELVWKPAGEPGDDTILRPVSNPFAKDGGLRLLEGNLGRAMYKASAVDPKFWTIEAPVRVFSDQDDVQKAFKAGELNKDVIVVVRFQGPRANGMPELHKLTPALGVLQDNGYKVALVTDGRMSGATGKVPVALHVSPEALGGGAIGKLRDGDIVRISVEEGKLEALVPADEWNARPHAEKPAFRPGTGRELFDIFRQNAAKAEDGAVAIYAGAGI.

Residues C156 and C223 each contribute to the [4Fe-4S] cluster site.

Belongs to the IlvD/Edd family. The cofactor is [4Fe-4S] cluster.

The catalysed reaction is 6-phospho-D-gluconate = 2-dehydro-3-deoxy-6-phospho-D-gluconate + H2O. The protein operates within carbohydrate metabolism; Entner-Doudoroff pathway. Its function is as follows. Catalyzes the dehydration of 6-phospho-D-gluconate to 2-dehydro-3-deoxy-6-phospho-D-gluconate. This Zymomonas mobilis subsp. mobilis (strain ATCC 31821 / ZM4 / CP4) protein is Phosphogluconate dehydratase.